The chain runs to 249 residues: Cytoplasmic envelopment protein 1 (249 aa).

The protein belongs to the herpesviridae cytoplasmic envelopment protein 1 family.

Its subcellular location is the virion. It localises to the virion tegument. The protein localises to the host cytoplasm. It is found in the host Golgi apparatus. Plays a critical role in cytoplasmic virus egress. Participates in the final step of tegumentation and envelope acquisition within the host cytoplasm. This is Cytoplasmic envelopment protein 1 (U75) from Homo sapiens (Human).